A 528-amino-acid polypeptide reads, in one-letter code: Ulvan lyase, short isoform (528 aa).

Positions 1–29 (MKINLSMRELVSRLSTTLKTAIALSVLTA) are cleaved as a signal peptide. A lipid anchor (N-palmitoyl cysteine) is attached at C30. C30 carries the S-diacylglycerol cysteine lipid modification. Substrate is bound at residue 151 to 152 (SH). Residue H152 is the Proton donor/acceptor of the active site. The Ca(2+) site is built by D218, D228, and K230. Substrate-binding residues include Y309 and R326. N329, D332, and F334 together coordinate Ca(2+). H390 contributes to the substrate binding site.

Belongs to the polysaccharide lyase 24 family.

The protein resides in the secreted. It is found in the cell membrane. Ulvan lyase involved in ulvan degradation. Ulvan is the main polysaccharide component of the Ulvales (green seaweed) cell wall. It is composed of disaccharide building blocks comprising 3-sulfated rhamnose (Rha3S) linked to D-glucuronic acid (GlcA), L-iduronic acid (IduA), or D-xylose (Xyl). Ulvan lyase catalyzes preferentially the endolytic cleavage of the glycosidic bond between Rha3S and the uronic acid GlcA, but not IduA, producing oligosaccharides that have unsaturated 4-deoxy-L-threo-hex-4-enopyranosiduronic acid (deltaUA) at the non-reducing end. The most abundant end products in the degradation of the ulvan polysaccharide were deltaUA-Rha3S disaccharides and deltaUA-Rha3S-IduA-Rha3S and deltaUA-Rha3S-Xyl-Rha3S tetrasaccharides. This Alteromonas sp. (strain LOR) protein is Ulvan lyase, short isoform.